We begin with the raw amino-acid sequence, 512 residues long: MGLPWYRVHTVVLNDPGRLIAVHLMHTALVSGWAGSMALYELAVFDPSDPILDPMWRQGMFVIPFMTRLGITKSWGGWSITGETVNNAGIWSYEGVAAVHIVLSGLLFLAAIWHWVYWDLELFRDERTGKPSLDLPKIFGIHLFLSGVLCFAFGAFHVTGLFGPGIWVSDPYGLTGKVQPVVPAWGAEGFDPFVPGGIASHHIAAGILGILAGLFHLSVRPPQRLYKGLRMGNVETVLSSSIAAVFFAAFVVAGTMWYGSAATPVELFGPTRYQWDQGFFQQEIDRRIRASKSENLSLSEAWSKIPEKLAFYDYIGNNPAKGGLFRAGAMDNGDGIAVGWLGHAVFKDREGHELFVRRMPTFFETFPVVLVDEEGIVRADVPFRRAESKYSVEQVGVTVEFYGGELNGVSFSDPATVKKYARRAQLGEIFEFDRATLKSDGVFRSSPRGWFTFGHATFALLFFFGHIWHGARTLFRDVFAGIDPDLDAQVEFGAFQKLGDPTTKRQIITRLI.

6 helical membrane passes run Ala-21 to Ser-36, Ile-101 to Trp-115, Gly-140 to Phe-156, Ile-203 to Ser-218, Val-237 to Val-252, and Thr-457 to Arg-472.

Belongs to the PsbB/PsbC family. PsbB subfamily. In terms of assembly, PSII is composed of 1 copy each of membrane proteins PsbA, PsbB, PsbC, PsbD, PsbE, PsbF, PsbH, PsbI, PsbJ, PsbK, PsbL, PsbM, PsbT, PsbX, PsbY, PsbZ, Psb30/Ycf12, at least 3 peripheral proteins of the oxygen-evolving complex and a large number of cofactors. It forms dimeric complexes. Requires Binds multiple chlorophylls. PSII binds additional chlorophylls, carotenoids and specific lipids. as cofactor.

The protein localises to the plastid. The protein resides in the chloroplast thylakoid membrane. Its function is as follows. One of the components of the core complex of photosystem II (PSII). It binds chlorophyll and helps catalyze the primary light-induced photochemical processes of PSII. PSII is a light-driven water:plastoquinone oxidoreductase, using light energy to abstract electrons from H(2)O, generating O(2) and a proton gradient subsequently used for ATP formation. This is Photosystem II CP47 reaction center protein from Physcomitrium patens (Spreading-leaved earth moss).